The following is a 110-amino-acid chain: Acid stress chaperone HdeA (110 aa).

An N-terminal signal peptide occupies residues 1-21 (MKKVLGVILGGLLLLPVVSNA). Residues C39 and C87 are joined by a disulfide bond.

Belongs to the HdeA family.

Its subcellular location is the periplasm. In terms of biological role, required for optimal acid stress protection. Exhibits a chaperone-like activity only at low pH by suppressing non-specifically the aggregation of denaturated periplasmic proteins. In Escherichia coli O157:H7, this protein is Acid stress chaperone HdeA.